Here is a 101-residue protein sequence, read N- to C-terminus: Large ribosomal subunit protein uL23 (101 aa).

It belongs to the universal ribosomal protein uL23 family. Part of the 50S ribosomal subunit. Contacts protein L29, and trigger factor when it is bound to the ribosome.

Its function is as follows. One of the early assembly proteins it binds 23S rRNA. One of the proteins that surrounds the polypeptide exit tunnel on the outside of the ribosome. Forms the main docking site for trigger factor binding to the ribosome. This is Large ribosomal subunit protein uL23 from Pseudarthrobacter chlorophenolicus (strain ATCC 700700 / DSM 12829 / CIP 107037 / JCM 12360 / KCTC 9906 / NCIMB 13794 / A6) (Arthrobacter chlorophenolicus).